The following is a 143-amino-acid chain: Nucleoside diphosphate kinase (143 aa).

ATP-binding residues include Lys11, Phe59, Arg87, Thr93, Arg104, and Asn114. His117 serves as the catalytic Pros-phosphohistidine intermediate.

Belongs to the NDK family. As to quaternary structure, homotetramer. Requires Mg(2+) as cofactor.

The protein localises to the cytoplasm. It catalyses the reaction a 2'-deoxyribonucleoside 5'-diphosphate + ATP = a 2'-deoxyribonucleoside 5'-triphosphate + ADP. The catalysed reaction is a ribonucleoside 5'-diphosphate + ATP = a ribonucleoside 5'-triphosphate + ADP. Its function is as follows. Major role in the synthesis of nucleoside triphosphates other than ATP. The ATP gamma phosphate is transferred to the NDP beta phosphate via a ping-pong mechanism, using a phosphorylated active-site intermediate. The protein is Nucleoside diphosphate kinase of Colwellia psychrerythraea (strain 34H / ATCC BAA-681) (Vibrio psychroerythus).